The sequence spans 217 residues: Peptide deformylase (217 aa).

Fe cation-binding residues include C91 and H133. The active site involves E134. H137 provides a ligand contact to Fe cation. Residues 153 to 217 are disordered; it reads VSEDGEEEEE…RRGSAAAKEE (65 aa). The span at 155-176 shows a compositional bias: acidic residues; the sequence is EDGEEEEEAEVAEVMPEPEAEG. Over residues 177–192 the composition is skewed to low complexity; sequence AGEPSAEGAGQAAAEA. The segment covering 206-217 has biased composition (basic and acidic residues); the sequence is GERRGSAAAKEE.

Belongs to the polypeptide deformylase family. Requires Fe(2+) as cofactor.

The enzyme catalyses N-terminal N-formyl-L-methionyl-[peptide] + H2O = N-terminal L-methionyl-[peptide] + formate. Its function is as follows. Removes the formyl group from the N-terminal Met of newly synthesized proteins. Requires at least a dipeptide for an efficient rate of reaction. N-terminal L-methionine is a prerequisite for activity but the enzyme has broad specificity at other positions. The chain is Peptide deformylase from Symbiobacterium thermophilum (strain DSM 24528 / JCM 14929 / IAM 14863 / T).